We begin with the raw amino-acid sequence, 282 residues long: Bis(5'-nucleosyl)-tetraphosphatase, symmetrical (282 aa).

Belongs to the Ap4A hydrolase family.

The enzyme catalyses P(1),P(4)-bis(5'-adenosyl) tetraphosphate + H2O = 2 ADP + 2 H(+). In terms of biological role, hydrolyzes diadenosine 5',5'''-P1,P4-tetraphosphate to yield ADP. The sequence is that of Bis(5'-nucleosyl)-tetraphosphatase, symmetrical from Burkholderia pseudomallei (strain 668).